The chain runs to 655 residues: Endoplasmic reticulum chaperone BiP (655 aa).

An N-terminal signal peptide occupies residues 1 to 19 (MMKFTVVAAALLLLGAVRA). A required for interaction with ELAPOR1 region spans residues 1–81 (MMKFTVVAAA…EGERLIGDAA (81 aa)). 37 to 40 (GTTY) contributes to the ATP binding site. Position 87 is a phosphoserine (Ser87). Residue Lys97 participates in ATP binding. Lys126 is subject to N6-acetyllysine. The interval 126–281 (KPYIQVDIGG…KKKTGKDVRK (156 aa)) is nucleotide-binding (NBD). Tyr161 is modified (3'-nitrotyrosine). Lys214 is subject to N6-acetyllysine. 228–230 (GGT) provides a ligand contact to ATP. Lys272 carries the post-translational modification N6-acetyllysine. 294 to 301 (EKAKRALS) provides a ligand contact to ATP. Lys327 is modified (N6-acetyllysine). A Glycyl lysine isopeptide (Lys-Gly) (interchain with G-Cter in SUMO2) cross-link involves residue Lys353. An N6-acetyllysine; alternate modification is found at Lys354. A Glycyl lysine isopeptide (Lys-Gly) (interchain with G-Cter in SUMO1); alternate cross-link involves residue Lys354. ATP is bound at residue 365–368 (GSTR). Positions 410 to 420 (QDTGDLVLLDV) are interdomain linker. A substrate-binding (SBD) region spans residues 421–501 (CPLTLGIETV…PRGVPQIEVT (81 aa)). Lys448 carries the N6-succinyllysine modification. Position 493 is an omega-N-methylarginine (Arg493). Thr519 bears the O-AMP-threonine; alternate mark. Phosphothreonine; alternate is present on Thr519. Lys586 carries the N6,N6,N6-trimethyllysine; by METTL21A; in vitro modification. At Lys586 the chain carries N6,N6-dimethyllysine; alternate. Lys586 bears the N6-methyllysine; alternate mark. Lys592 carries the post-translational modification N6-methyllysine. A disordered region spans residues 632-655 (ISKLYGSGGPPPTGEEDTSEKDEL). Phosphothreonine is present on residues Thr644 and Thr649. Residues 645 to 655 (GEEDTSEKDEL) show a composition bias toward acidic residues. A Phosphoserine modification is found at Ser650. A Prevents secretion from ER motif is present at residues 652–655 (KDEL).

It belongs to the heat shock protein 70 family. In terms of assembly, monomer and homooligomer; homooligomerization via the interdomain linker inactivates the chaperone activity and acts as a storage of HSPA5/BiP molecules. Interacts with DNAJC1 (via J domain). Component of an EIF2 complex at least composed of CELF1/CUGBP1, CALR, CALR3, EIF2S1, EIF2S2, HSP90B1 and HSPA5. Part of a large chaperone multiprotein complex comprising DNAJB11, HSP90B1, HSPA5, HYOU, PDIA2, PDIA4, PDIA6, PPIB, SDF2L1, UGGT1 and very small amounts of ERP29, but not, or at very low levels, CALR nor CANX. Interacts with TMEM132A and TRIM21. May form a complex with ERLEC1, OS9, SEL1L and SYVN1. Interacts with DNAJC10. Interacts with DNAJB9/ERdj4; leading to recruit HSPA5/BiP to ERN1/IRE1. Interacts with ERN1/IRE1 (via luminal domain); the interaction takes place following interaction with DNAJB9/ERdj4 and leads to inactivate ERN1/IRE1, the interaction also competitively inhibits ERN1 interaction with MANF. Interacts directly with MANF (via SAP domain); the interaction inhibits ATP binding to HSPA5/BiP and subsequent nucleotide exchange. Interacts with ERN1 (via luminal domain); the interaction competitively inhibits ERN1 interaction with MANF. Interacts with EIF2AK3/PERK (via luminal domain); interaction leads to inactivate EIF2AK3/PERK. Interacts with MX1. Interacts with METTL23. Interacts with CEMIP; the interaction induces calcium leakage from the endoplasmic reticulum and cell migration. Interacts with PCSK4 form; the interaction takes place in the endoplasmic reticulum. Interacts with CIPC. Interacts with CCDC88B (via C-terminus); the interaction opposes ERN1-mediated JNK activation, protecting against apoptosis. Interacts with INPP5K; necessary for INPP5K localization at the endoplasmic reticulum. Interacts with MANF; the interaction is direct. Interacts with LOXL2; leading to activate the ERN1/IRE1-XBP1 pathway of the unfolded protein response. Interacts with CLU under stressed condition; interaction increases CLU protein stability; facilitates its retrotranslocation and redistribution to the mitochondria; cooperatively suppress stress-induced apoptosis by stabilizing mitochondrial membrane integrity. Interacts with CCDC47. Interacts with CLN3. Interacts with ELAPOR1; may regulate the function of HSPA5 in apoptosis and cell proliferation. Interacts with CASP7. Interacts with ILDR2; the interaction stabilizes ILDR2 expression. Interacts with ADAM7. Post-translationally, in unstressed cells, AMPylation at Thr-519 by FICD inactivates the chaperome activity: AMPylated form is locked in a relatively inert state and only weakly stimulated by J domain-containing proteins. In response to endoplasmic reticulum stress, de-AMPylation by the same protein, FICD, restores the chaperone activity. Expressed in sperm (at protein level).

Its subcellular location is the endoplasmic reticulum lumen. It is found in the melanosome. It localises to the cytoplasm. The protein localises to the cell surface. The enzyme catalyses ATP + H2O = ADP + phosphate + H(+). Its activity is regulated as follows. The chaperone activity is regulated by ATP-induced allosteric coupling of the nucleotide-binding (NBD) and substrate-binding (SBD) domains. In the ADP-bound and nucleotide-free (apo) states, the two domains have little interaction. In contrast, in the ATP-bound state the two domains are tightly coupled, which results in drastically accelerated kinetics in both binding and release of polypeptide substrates. J domain-containing co-chaperones (DNAJB9/ERdj4 or DNAJC10/ERdj5) stimulate the ATPase activity and are required for efficient substrate recognition by HSPA5/BiP. Homooligomerization inactivates participating HSPA5/BiP protomers and probably act as reservoirs to store HSPA5/BiP molecules when they are not needed by the cell. Endoplasmic reticulum chaperone that plays a key role in protein folding and quality control in the endoplasmic reticulum lumen. Involved in the correct folding of proteins and degradation of misfolded proteins via its interaction with DNAJC10/ERdj5, probably to facilitate the release of DNAJC10/ERdj5 from its substrate. Acts as a key repressor of the EIF2AK3/PERK and ERN1/IRE1-mediated unfolded protein response (UPR). In the unstressed endoplasmic reticulum, recruited by DNAJB9/ERdj4 to the luminal region of ERN1/IRE1, leading to disrupt the dimerization of ERN1/IRE1, thereby inactivating ERN1/IRE1. Also binds and inactivates EIF2AK3/PERK in unstressed cells. Accumulation of misfolded protein in the endoplasmic reticulum causes release of HSPA5/BiP from ERN1/IRE1 and EIF2AK3/PERK, allowing their homodimerization and subsequent activation. Plays an auxiliary role in post-translational transport of small presecretory proteins across endoplasmic reticulum (ER). May function as an allosteric modulator for SEC61 channel-forming translocon complex, likely cooperating with SEC62 to enable the productive insertion of these precursors into SEC61 channel. Appears to specifically regulate translocation of precursors having inhibitory residues in their mature region that weaken channel gating. May also play a role in apoptosis and cell proliferation. This is Endoplasmic reticulum chaperone BiP from Mus musculus (Mouse).